The following is a 239-amino-acid chain: Phosphoribosylaminoimidazole-succinocarboxamide synthase (239 aa).

This sequence belongs to the SAICAR synthetase family.

It catalyses the reaction 5-amino-1-(5-phospho-D-ribosyl)imidazole-4-carboxylate + L-aspartate + ATP = (2S)-2-[5-amino-1-(5-phospho-beta-D-ribosyl)imidazole-4-carboxamido]succinate + ADP + phosphate + 2 H(+). The protein operates within purine metabolism; IMP biosynthesis via de novo pathway; 5-amino-1-(5-phospho-D-ribosyl)imidazole-4-carboxamide from 5-amino-1-(5-phospho-D-ribosyl)imidazole-4-carboxylate: step 1/2. This chain is Phosphoribosylaminoimidazole-succinocarboxamide synthase, found in Nitratiruptor sp. (strain SB155-2).